Reading from the N-terminus, the 200-residue chain is MLDVIELDFDYHDQPLLQQISFHLPAGGLLHLKGSNGAGKTTLLKLIAGLLNPEKGEILFERRSIKKDLCTYQKQLCFVGHRSGINPYLTLRENCLYDIHFSPGAVGITELCRLFSLEHLIDYPCGLLSSGQKRQVALLRLWMSKAKLWLLDEPLVALDELSLLTIIRKIQEHRAKGGAVLLTSHQDLPLNKADYEEYHL.

Residues leucine 2 to leucine 200 enclose the ABC transporter domain. Glycine 34–threonine 41 is an ATP binding site.

The protein belongs to the ABC transporter superfamily. CcmA exporter (TC 3.A.1.107) family. The complex is composed of two ATP-binding proteins (CcmA) and two transmembrane proteins (CcmB).

It localises to the cell inner membrane. The enzyme catalyses heme b(in) + ATP + H2O = heme b(out) + ADP + phosphate + H(+). Part of the ABC transporter complex CcmAB involved in the biogenesis of c-type cytochromes; once thought to export heme, this seems not to be the case, but its exact role is uncertain. Responsible for energy coupling to the transport system. The sequence is that of Cytochrome c biogenesis ATP-binding export protein CcmA from Legionella pneumophila.